Here is a 199-residue protein sequence, read N- to C-terminus: Chorismate pyruvate-lyase (199 aa).

This sequence belongs to the chorismate pyruvate-lyase type 2 family.

It catalyses the reaction chorismate = 4-hydroxybenzoate + pyruvate. Removes the pyruvyl group from chorismate to provide 4-hydroxybenzoate (4HB). Involved in the synthesis of glycosylated p-hydroxybenzoic acid methyl esters (p-HBADs) and phenolic glycolipids (PGL) that play important roles in the pathogenesis of mycobacterial infections. In Mycobacterium bovis (strain ATCC BAA-935 / AF2122/97), this protein is Chorismate pyruvate-lyase.